The sequence spans 265 residues: Hydroxyethylthiazole kinase (265 aa).

Substrate is bound at residue methionine 44. ATP contacts are provided by lysine 120 and serine 166. Residue glycine 193 coordinates substrate.

Belongs to the Thz kinase family. Mg(2+) is required as a cofactor.

It carries out the reaction 5-(2-hydroxyethyl)-4-methylthiazole + ATP = 4-methyl-5-(2-phosphooxyethyl)-thiazole + ADP + H(+). It functions in the pathway cofactor biosynthesis; thiamine diphosphate biosynthesis; 4-methyl-5-(2-phosphoethyl)-thiazole from 5-(2-hydroxyethyl)-4-methylthiazole: step 1/1. Functionally, catalyzes the phosphorylation of the hydroxyl group of 4-methyl-5-beta-hydroxyethylthiazole (THZ). The polypeptide is Hydroxyethylthiazole kinase (Methanosphaerula palustris (strain ATCC BAA-1556 / DSM 19958 / E1-9c)).